A 341-amino-acid chain; its full sequence is MIDQNKLITKWKKAFAKAKNLTTLVNLKNTLHNSDLKPLLQKIKTATKLSEKSSLGKLYQSLDIQLTDLLTSYKKTFEINNQVSQKPSLDVMLPATEFTNGSNNALYQVIDNLVEYFKSFLFTINFDSELTSISDCFDLLNIPKDHSSRNESDSFYIDKTSLLRTHCTATTLKAVRTSKKTNNPDIRVVSLGAVFRNDSDDATHSHQFTQLDFMWIKKGLSLANLKWFINNMITHFFGENTFTRFRLSHFPFTEPSFEIDIRCWLCQNGCSICKQTKWIEILGAGIIHPQVMNNMGIGDTENITGIAAGIGIERLAMLKYGIDDIRDFYDNNFKFLTQFTD.

Residue Glu-254 participates in Mg(2+) binding.

The protein belongs to the class-II aminoacyl-tRNA synthetase family. Phe-tRNA synthetase alpha subunit type 1 subfamily. Tetramer of two alpha and two beta subunits. Mg(2+) serves as cofactor.

It is found in the cytoplasm. It catalyses the reaction tRNA(Phe) + L-phenylalanine + ATP = L-phenylalanyl-tRNA(Phe) + AMP + diphosphate + H(+). The polypeptide is Phenylalanine--tRNA ligase alpha subunit (pheS) (Mycoplasma genitalium (strain ATCC 33530 / DSM 19775 / NCTC 10195 / G37) (Mycoplasmoides genitalium)).